The sequence spans 486 residues: N-succinylglutamate 5-semialdehyde dehydrogenase (486 aa).

220-225 serves as a coordination point for NAD(+); it reads GSSRTG. Catalysis depends on residues Glu243 and Cys277.

The protein belongs to the aldehyde dehydrogenase family. AstD subfamily.

It catalyses the reaction N-succinyl-L-glutamate 5-semialdehyde + NAD(+) + H2O = N-succinyl-L-glutamate + NADH + 2 H(+). Its pathway is amino-acid degradation; L-arginine degradation via AST pathway; L-glutamate and succinate from L-arginine: step 4/5. Its function is as follows. Catalyzes the NAD-dependent reduction of succinylglutamate semialdehyde into succinylglutamate. This chain is N-succinylglutamate 5-semialdehyde dehydrogenase, found in Shewanella putrefaciens (strain CN-32 / ATCC BAA-453).